A 665-amino-acid polypeptide reads, in one-letter code: Translation factor GUF1 homolog, mitochondrial (665 aa).

A mitochondrion-targeting transit peptide spans 1-35 (MAGAAVLRRSARRIYRHLAAAPAFSRSVLQQPKRL). The tract at residues 34 to 53 (RLLSSQSSPEHGARGAVSGS) is disordered. The tr-type G domain occupies 61 to 249 (ERVRNFSIIA…AVIERIPSPP (189 aa)). Residues 70-77 (AHVDHGKS), 142-146 (DTPGH), and 196-199 (NKID) contribute to the GTP site.

The protein belongs to the TRAFAC class translation factor GTPase superfamily. Classic translation factor GTPase family. LepA subfamily.

The protein resides in the mitochondrion inner membrane. The enzyme catalyses GTP + H2O = GDP + phosphate + H(+). Promotes mitochondrial protein synthesis. May act as a fidelity factor of the translation reaction, by catalyzing a one-codon backward translocation of tRNAs on improperly translocated ribosomes. Binds to mitochondrial ribosomes in a GTP-dependent manner. The polypeptide is Translation factor GUF1 homolog, mitochondrial (Sorghum bicolor (Sorghum)).